A 45-amino-acid chain; its full sequence is Gene 78 protein (45 aa).

A compositionally biased stretch (basic and acidic residues) spans 1-14; sequence MKKMSDQLKARLEL. Residues 1-45 form a disordered region; that stretch reads MKKMSDQLKARLELRLSNAAQPHRNRKREMKRPGKGNRNNWKKEY. Residues 23-35 are compositionally biased toward basic residues; sequence HRNRKREMKRPGK.

The protein is Gene 78 protein (78) of Mycobacterium phage L5 (Mycobacteriophage L5).